We begin with the raw amino-acid sequence, 146 residues long: Large ribosomal subunit protein uL15 (146 aa).

The segment covering 1–13 (MKLHELKAAEGSR) has biased composition (basic and acidic residues). The segment at 1 to 61 (MKLHELKAAE…GGQTPLFRRM (61 aa)) is disordered. Gly residues-rich tracts occupy residues 23–35 (TSSG…GRGQ) and 42–52 (SGGGVRLGFEG).

It belongs to the universal ribosomal protein uL15 family. As to quaternary structure, part of the 50S ribosomal subunit.

Its function is as follows. Binds to the 23S rRNA. The chain is Large ribosomal subunit protein uL15 from Streptococcus uberis (strain ATCC BAA-854 / 0140J).